The following is a 351-amino-acid chain: Fe(3+) ions import ATP-binding protein FbpC (351 aa).

The ABC transporter domain maps to 7–237; sequence VVLKNICKRF…PKSMFMANFM (231 aa). Position 39–46 (39–46) interacts with ATP; the sequence is GPSGCGKT.

This sequence belongs to the ABC transporter superfamily. Fe(3+) ion importer (TC 3.A.1.10) family. In terms of assembly, the complex is composed of two ATP-binding proteins (FbpC), two transmembrane proteins (FbpB) and a solute-binding protein (FbpA).

The protein resides in the cell inner membrane. It catalyses the reaction Fe(3+)(out) + ATP + H2O = Fe(3+)(in) + ADP + phosphate + H(+). Its function is as follows. Part of the ABC transporter complex FbpABC involved in Fe(3+) ions import. Responsible for energy coupling to the transport system. The sequence is that of Fe(3+) ions import ATP-binding protein FbpC from Vibrio cholerae serotype O1 (strain ATCC 39315 / El Tor Inaba N16961).